Here is a 160-residue protein sequence, read N- to C-terminus: Large ribosomal subunit protein uL22c (160 aa).

Belongs to the universal ribosomal protein uL22 family. Part of the 50S ribosomal subunit.

The protein resides in the plastid. It localises to the chloroplast. Its function is as follows. This protein binds specifically to 23S rRNA. The globular domain of the protein is located near the polypeptide exit tunnel on the outside of the subunit, while an extended beta-hairpin is found that lines the wall of the exit tunnel in the center of the 70S ribosome. This chain is Large ribosomal subunit protein uL22c (rpl22), found in Capsella bursa-pastoris (Shepherd's purse).